A 557-amino-acid polypeptide reads, in one-letter code: Potassium-transporting ATPase potassium-binding subunit (557 aa).

Helical transmembrane passes span 5-25 (GFLL…PLGS), 63-83 (LSAI…MLLG), 132-152 (GLTV…FAFI), 170-190 (LLRI…LFFI), 253-273 (FVQM…FGEV), 283-303 (LLWA…WAEV), 329-349 (VLVS…AVIA), 356-376 (ALGG…FGGV), 379-399 (GLYG…LMIG), 416-436 (LTAL…ALAM), 484-504 (LLAF…MAIA), and 526-546 (LFVG…FIPA).

It belongs to the KdpA family. The system is composed of three essential subunits: KdpA, KdpB and KdpC.

The protein localises to the cell inner membrane. In terms of biological role, part of the high-affinity ATP-driven potassium transport (or Kdp) system, which catalyzes the hydrolysis of ATP coupled with the electrogenic transport of potassium into the cytoplasm. This subunit binds the periplasmic potassium ions and delivers the ions to the membrane domain of KdpB through an intramembrane tunnel. In Escherichia coli (strain SMS-3-5 / SECEC), this protein is Potassium-transporting ATPase potassium-binding subunit.